Consider the following 384-residue polypeptide: MDIADQTFVKKVNQKLLLKEILKNSPISRAKLSEMTGLNKSTVSSQVNTLMKESMVFEIGQGQSSGGRRPVMLVFNKKAGYSVGIDVGVDYINGILTDLEGTIVLDQYRHLESNSPEITKDILIDMIHHFITQMPQSPYGLIGIGICVPGLIDKDQKIVFTPNSNWRDIDLKSSIQEKYNVPVFIENEANAGAYGEKVFGAAKNHDNIIYVSISTGIGIGVIINNHLYRGVSGFSGEMGHMTIDFNGPKCSCGNRGCWELYASEKALLKSLQTKEKKLSYQDIINLAHLNDIGTLNALQNFGFYLGIGLTNILNTFNPQAVILRNSIIESHPMVLNSMRSEVSSRVYSQLGNSYELLPSSLGQNAPALGMSSIVIDHFLDMITM.

A DNA-binding region (H-T-H motif) is located at residues 29 to 48; sequence RAKLSEMTGLNKSTVSSQVN.

It belongs to the ROK (NagC/XylR) family.

In terms of biological role, transcriptional repressor of xylose-utilizing enzymes. This Bacillus subtilis (strain 168) protein is Xylose repressor (xylR).